Here is a 314-residue protein sequence, read N- to C-terminus: DNA-directed RNA polymerase subunit alpha (314 aa).

The interval 1-227 (MTTFEIECIE…ELLFPLKEIN (227 aa)) is alpha N-terminal domain (alpha-NTD). The tract at residues 237 to 314 (IEDSKINQIL…LPKEKTSKSN (78 aa)) is alpha C-terminal domain (alpha-CTD).

It belongs to the RNA polymerase alpha chain family. In terms of assembly, in plastids the minimal PEP RNA polymerase catalytic core is composed of four subunits: alpha, beta, beta', and beta''. When a (nuclear-encoded) sigma factor is associated with the core the holoenzyme is formed, which can initiate transcription.

It localises to the plastid. The protein localises to the chloroplast. It carries out the reaction RNA(n) + a ribonucleoside 5'-triphosphate = RNA(n+1) + diphosphate. Its function is as follows. DNA-dependent RNA polymerase catalyzes the transcription of DNA into RNA using the four ribonucleoside triphosphates as substrates. The chain is DNA-directed RNA polymerase subunit alpha from Pyrenomonas salina.